Here is a 148-residue protein sequence, read N- to C-terminus: Leghemoglobin-1 (148 aa).

One can recognise a Globin domain in the interval 2–146 (GFTDKQEALV…LATAIKKAMK (145 aa)). 2 positions are modified to nitrated tyrosine: Tyr-24 and Tyr-29. Ser-44 is a binding site for heme b. Position 44 is a phosphoserine (Ser-44). O2 is bound at residue His-61. Heme b contacts are provided by His-93 and Lys-96. Position 134 is a nitrated tyrosine (Tyr-134).

Belongs to the plant globin family. As to quaternary structure, monomer. In terms of processing, nitrated in effective nodules and particularly in hypoxic conditions; this mechanism may play a protective role in the symbiosis by buffering toxic peroxynitrite NO(2)(-). Nitration level decrease during nodule senescence. Post-translationally, phosphorylation at Ser-44 disrupts the molecular environment of its porphyrin ring oxygen binding pocket, thus leading to a reduced oxygen consumption and to the delivery of oxygen O(2) to symbiosomes. Root nodules.

It localises to the cytoplasm. The protein localises to the cytosol. The protein resides in the nucleus. Leghemoglobin that reversibly binds oxygen O(2) through a pentacoordinated heme iron. In root nodules, facilitates the diffusion of oxygen to the bacteroids while preventing the bacterial nitrogenase from being inactivated by buffering dioxygen, nitric oxide and carbon monoxide, and promoting the formation of reactive oxygen species (ROS, e.g. H(2)O(2)). This role is essential for symbiotic nitrogen fixation (SNF). This chain is Leghemoglobin-1, found in Pisum sativum (Garden pea).